The primary structure comprises 633 residues: Probably inactive receptor-like protein kinase At2g46850 (633 aa).

A signal peptide spans 1–28 (MPPLFLPSSSSALFLLLLLLLTLQTLTS). The Extracellular portion of the chain corresponds to 29–285 (ISLSQPQALR…IKKHNGKKLT (257 aa)). Residues Asn45, Asn69, and Asn231 are each glycosylated (N-linked (GlcNAc...) asparagine). Residues 286–306 (VLAGVLAPLFILGSLLALFCL) traverse the membrane as a helical segment. Over 307–633 (LKRPVTSHKD…SPDSIYLPKT (327 aa)) the chain is Cytoplasmic. Residues 355-633 (FQDSQKLTQG…SPDSIYLPKT (279 aa)) enclose the Protein kinase domain. ATP contacts are provided by residues 361–369 (LTQGKTGTI) and Lys384.

It belongs to the protein kinase superfamily. Ser/Thr protein kinase family.

The protein resides in the membrane. This chain is Probably inactive receptor-like protein kinase At2g46850, found in Arabidopsis thaliana (Mouse-ear cress).